The following is a 267-amino-acid chain: Urease accessory protein UreD 2 (267 aa).

Belongs to the UreD family. UreD, UreF and UreG form a complex that acts as a GTP-hydrolysis-dependent molecular chaperone, activating the urease apoprotein by helping to assemble the nickel containing metallocenter of UreC. The UreE protein probably delivers the nickel.

It localises to the cytoplasm. Required for maturation of urease via the functional incorporation of the urease nickel metallocenter. The polypeptide is Urease accessory protein UreD 2 (Synechococcus sp. (strain JA-3-3Ab) (Cyanobacteria bacterium Yellowstone A-Prime)).